The primary structure comprises 547 residues: Probable ABC transporter periplasmic-binding protein SapA (547 aa).

An N-terminal signal peptide occupies residues 1 to 21 (MRQVLSSLLVIAGLVSGQAIA).

This sequence belongs to the bacterial solute-binding protein 5 family.

Its subcellular location is the periplasm. Not part of a putrescine export system. Very similar to a S.typhimurium protein implicated in antimicrobial peptide resistance, but the SapBCDF operon in E.coli is implicated in putrescine export. This chain is Probable ABC transporter periplasmic-binding protein SapA (sapA), found in Escherichia coli (strain K12).